A 279-amino-acid polypeptide reads, in one-letter code: Dehydrogenase/reductase SDR family member 4 (279 aa).

37–61 (LVTASTDGIGLAIARRLAEDGAHVV) serves as a coordination point for NADP(+). K93 is modified (N6-acetyllysine; alternate). K93 is modified (N6-succinyllysine; alternate). K106 bears the N6-acetyllysine mark. Residue S170 coordinates substrate. The active-site Proton acceptor is Y183. An NADP(+)-binding site is contributed by K187. An N6-acetyllysine; alternate modification is found at K217. K217 is modified (N6-succinyllysine; alternate). S221 carries the post-translational modification Phosphoserine. K228 and K235 each carry N6-succinyllysine. The Peroxisomal targeting signal signature appears at 277–279 (SRL).

This sequence belongs to the short-chain dehydrogenases/reductases (SDR) family. As to quaternary structure, homotetramer.

It is found in the peroxisome. It catalyses the reaction a secondary alcohol + NADP(+) = a ketone + NADPH + H(+). It carries out the reaction 3alpha-hydroxy-5beta-pregnan-20-one + NADP(+) = 5beta-pregnan-3,20-dione + NADPH + H(+). The enzyme catalyses 5beta-dihydrotestosterone + NADPH + H(+) = 5beta-androstane-3alpha,17beta-diol + NADP(+). The catalysed reaction is all-trans-retinol + NADP(+) = all-trans-retinal + NADPH + H(+). It catalyses the reaction isatin + NADPH + H(+) = 3-hydroxyindolin-2-one + NADP(+). Functionally, NADPH-dependent oxidoreductase which catalyzes the reduction of a variety of compounds bearing carbonyl groups including ketosteroids, alpha-dicarbonyl compounds, aldehydes, aromatic ketones and quinones. Reduces all-trans-retinal and 9-cis retinal. Reduces 3-ketosteroids and benzil into 3alpha-hydroxysteroids and S-benzoin, respectively, in contrast to the stereoselectivity of primates DHRS4s which produce 3beta-hydroxysteroids and R-benzoin. In the reverse reaction, catalyzes the NADP-dependent oxidation of 3alpha-hydroxysteroids and alcohol, but with much lower efficiency. Involved in the metabolism of 3alpha-hydroxysteroids, retinoid, isatin and xenobiotic carbonyl compounds. The chain is Dehydrogenase/reductase SDR family member 4 (Dhrs4) from Rattus norvegicus (Rat).